Here is a 515-residue protein sequence, read N- to C-terminus: Bifunctional purine biosynthesis protein PurH (515 aa).

The region spanning M1 to V145 is the MGS-like domain.

It belongs to the PurH family.

It catalyses the reaction (6R)-10-formyltetrahydrofolate + 5-amino-1-(5-phospho-beta-D-ribosyl)imidazole-4-carboxamide = 5-formamido-1-(5-phospho-D-ribosyl)imidazole-4-carboxamide + (6S)-5,6,7,8-tetrahydrofolate. The enzyme catalyses IMP + H2O = 5-formamido-1-(5-phospho-D-ribosyl)imidazole-4-carboxamide. The protein operates within purine metabolism; IMP biosynthesis via de novo pathway; 5-formamido-1-(5-phospho-D-ribosyl)imidazole-4-carboxamide from 5-amino-1-(5-phospho-D-ribosyl)imidazole-4-carboxamide (10-formyl THF route): step 1/1. Its pathway is purine metabolism; IMP biosynthesis via de novo pathway; IMP from 5-formamido-1-(5-phospho-D-ribosyl)imidazole-4-carboxamide: step 1/1. The polypeptide is Bifunctional purine biosynthesis protein PurH (Streptococcus mutans serotype c (strain ATCC 700610 / UA159)).